The chain runs to 629 residues: Coiled-coil domain-containing protein 120 (629 aa).

The tract at residues 31-70 is involved in CYTH2-binding; sequence RLRGLLDRQRALQEALSVKLQELRKVCLQEAELTGQLPPE. Residues 109–173 are a coiled coil; sequence ELALEALERE…LRDFRARLGL (65 aa). Low complexity-rich tracts occupy residues 209–219 and 279–294; these read HSESSSLSESG and ASPT…SASS. Residues 209–356 form a disordered region; that stretch reads HSESSSLSES…LFAARTRRSN (148 aa). Polar residues predominate over residues 323–332; it reads RQWSGSQDSQ. Ser-355 and Ser-357 each carry phosphoserine. Disordered regions lie at residues 399 to 432 and 602 to 629; these read QPVP…GAPR and PSQA…FTDG. Residues 418-432 show a composition bias toward low complexity; the sequence is ARPSSAAPASRGAPR. Arg-432 carries the post-translational modification Omega-N-methylarginine.

As to quaternary structure, interacts with NIN and CEP170; leading to recruit them to centrosomes. Interacts with CYTH2; this interaction is direct and stabilizes CCDC120, possibly by preventing ubiquitination. Post-translationally, ubiquitinated; interaction with CYTH2 may prevent ubiquitination.

It is found in the cytoplasm. Its subcellular location is the cytoskeleton. It localises to the microtubule organizing center. The protein resides in the centrosome. The protein localises to the centriole. It is found in the cell projection. Its subcellular location is the neuron projection. It localises to the growth cone. The protein resides in the endosome. Centriolar protein required for centriole subdistal appendage assembly and microtubule anchoring in interphase cells. Together with CCDC68, cooperate with subdistal appendage components ODF2, NIN and CEP170 for hierarchical subdistal appendage assembly. Recruits NIN and CEP170 to centrosomes. Also required for neurite growth. Localizes CYTH2 to vesicles to allow its transport along neurites, and subsequent ARF6 activation and neurite growth. The polypeptide is Coiled-coil domain-containing protein 120 (Mus musculus (Mouse)).